The primary structure comprises 1464 residues: Collagen alpha-1(I) chain (1464 aa).

The N-terminal stretch at 1–22 (MFSFVDLRLLLLLAATALLTHG) is a signal peptide. The propeptide at 23-161 (QEEGQVEGQD…PPGLGGNFAP (139 aa)) is N-terminal propeptide. One can recognise a VWFC domain in the interval 38–96 (ITCVQNGLRYHDRDVWKPEPCRICVCDNGKVLCDDVICDETKNCPGAEVPEGECCPVCP). A disordered region spans residues 98 to 1214 (GSESPTDQET…PQEKAHDGGR (1117 aa)). The segment covering 138–153 (PGLPGPPGPPGPPGPP) has biased composition (pro residues). Gln-162 bears the Pyrrolidone carboxylic acid mark. The segment at 162–178 (QLSYGYDEKSTGGISVP) is nonhelical region (N-terminal). Lys-170 carries the post-translational modification Allysine. Ser-171 bears the Phosphoserine mark. The tract at residues 179–1192 (GPMGPSGPRG…PGPPGPPGPP (1014 aa)) is triple-helical region. 4-hydroxyproline occurs at positions 190, 193, 196, 205, 208, 211, 226, 241, 247, 256, and 262. Residues 198 to 217 (PQGFQGPPGEPGEPGASGPM) show a composition bias toward low complexity. The span at 229–243 (NGDDGEAGKPGRPGE) shows a compositional bias: basic and acidic residues. A 5-hydroxylysine; alternate modification is found at Lys-265. An O-linked (Gal...) hydroxylysine; alternate glycan is attached at Lys-265. A Phosphoserine modification is found at Ser-271. Positions 279-295 (DAGPAGPKGEPGSPGEN) are enriched in low complexity. Pro-289, Pro-292, Pro-298, Pro-307, and Pro-313 each carry 4-hydroxyproline. Low complexity predominate over residues 318-331 (PAGARGNDGATGAA). The span at 333–345 (PPGPTGPAGPPGF) shows a compositional bias: pro residues. 4-hydroxyproline occurs at positions 334, 343, 346, 373, 376, 388, 394, 403, 409, 412, and 427. Low complexity predominate over residues 379–418 (AGAAGPAGNPGADGQPGAKGANGAPGIAGAPGFPGARGPS). Lys-430 bears the 5-hydroxylysine mark. Residues Pro-436, Pro-439, Pro-451, Pro-460, Pro-475, Pro-481, Pro-490, and Pro-496 each carry the 4-hydroxyproline modification. Residues 448 to 457 (KGEPGPVGVQ) are compositionally biased toward low complexity. The span at 485–494 (GERGGPGSRG) shows a compositional bias: gly residues. Lys-505 is subject to 5-hydroxylysine. Residues Pro-514, Pro-523, Pro-529, Pro-535, Pro-544, Pro-547, Pro-556, Pro-565, Pro-571, Pro-583, Pro-592, Pro-601, Pro-604, Pro-622, Pro-640, Pro-646, Pro-652, Pro-658, Pro-664, Pro-670, Pro-682, Pro-691, Pro-703, Pro-715, Pro-718, Pro-724, Pro-730, and Pro-739 each carry the 4-hydroxyproline modification. Residues 538–564 (KGLTGSPGSPGPDGKTGPPGPAGQDGR) show a composition bias toward low complexity. Low complexity predominate over residues 573–592 (ARGQAGVMGFPGPKGAAGEP). Low complexity predominate over residues 634–661 (QGPAGSPGFQGLPGPAGPPGEAGKPGEQ). Positions 696–724 (PRGANGAPGNDGAKGDAGAPGAPGSQGAP) are enriched in low complexity. Positions 745 to 747 (RGD) match the Cell attachment site motif. Lys-751 is modified (5-hydroxylysine). Residues Pro-757, Pro-772, and Pro-778 each carry the 4-hydroxyproline modification. Residues 784 to 798 (SGPSGPAGPTGARGA) show a composition bias toward low complexity. Residue Ser-787 is modified to Phosphoserine. Pro-799, Pro-805, Pro-808, Pro-817, Pro-823, Pro-841, Pro-850, and Pro-859 each carry 4-hydroxyproline. Positions 811 to 838 (AGFAGPPGADGQPGAKGEPGDAGAKGDA) are enriched in low complexity. A compositionally biased stretch (pro residues) spans 840 to 852 (PPGPAGPAGPPGP). The span at 853–883 (IGNVGAPGAKGARGSAGPPGATGFPGAAGRV) shows a compositional bias: low complexity. The residue at position 862 (Lys-862) is a 5-hydroxylysine. Pro-871 and Pro-877 each carry 4-hydroxyproline. 3-hydroxyproline is present on Pro-885. 16 positions are modified to 4-hydroxyproline: Pro-886, Pro-895, Pro-898, Pro-919, Pro-928, Pro-937, Pro-946, Pro-964, Pro-973, Pro-976, Pro-982, Pro-997, Pro-1003, Pro-1009, Pro-1018, and Pro-1024. Over residues 912 to 921 (ETGPAGRPGE) the composition is skewed to low complexity. A compositionally biased stretch (low complexity) spans 931–955 (AGEKGSPGADGPAGAPGTPGPQGIA). Residues 996–1006 (PPGPMGPPGLA) show a composition bias toward pro residues. A 5-hydroxylysine modification is found at Lys-1033. The segment covering 1042-1057 (AGPPGAPGAPGAPGPV) has biased composition (pro residues). 4-hydroxyproline is present on residues Pro-1045, Pro-1048, and Pro-1051. Residues 1078–1092 (VGPVGARGPAGPQGP) show a composition bias toward low complexity. The Cell attachment site motif lies at 1093–1095 (RGD). Residues 1093-1107 (RGDKGETGEQGDRGI) show a composition bias toward basic and acidic residues. Position 1096 is a 5-hydroxylysine (Lys-1096). Lys-1108 carries the 5-hydroxylysine; alternate modification. An O-linked (Gal...) hydroxylysine; alternate glycan is attached at Lys-1108. Pro-1120, Pro-1123, Pro-1126, Pro-1144, and Pro-1159 each carry 4-hydroxyproline. Residues 1126-1159 (PGEQGPSGASGPAGPRGPPGSAGAPGKDGLNGLP) are compositionally biased toward low complexity. Pro-1164 is modified (3-hydroxyproline). The residue at position 1165 (Pro-1165) is a 4-hydroxyproline. Positions 1177–1192 (VGPPGPPGPPGPPGPP) are enriched in pro residues. Pro-1179 bears the 3-hydroxyproline mark. Pro-1180 bears the 4-hydroxyproline mark. Pro-1182 carries the post-translational modification 3-hydroxyproline. Pro-1183 is modified (4-hydroxyproline). Residue Pro-1185 is modified to 3-hydroxyproline. 3 positions are modified to 4-hydroxyproline: Pro-1186, Pro-1189, and Pro-1192. Residues 1193–1218 (SAGFDFSFLPQPPQEKAHDGGRYYRA) are nonhelical region (C-terminal). Position 1208 is an allysine (Lys-1208). A propeptide spans 1219–1464 (DDANVVRDRD…GFDVGPVCFL (246 aa)) (C-terminal propeptide). Residues 1229 to 1464 (LEVDTTLKSL…GFDVGPVCFL (236 aa)) enclose the Fibrillar collagen NC1 domain. 3 disulfides stabilise this stretch: Cys-1259-Cys-1291, Cys-1299-Cys-1462, and Cys-1370-Cys-1415. Asp-1277, Asn-1279, Gln-1280, Cys-1282, and Asp-1285 together coordinate Ca(2+). Asn-1365 carries an N-linked (GlcNAc...) asparagine glycan.

This sequence belongs to the fibrillar collagen family. As to quaternary structure, trimers of one alpha 2(I) and two alpha 1(I) chains. Interacts with MRC2. Interacts with TRAM2. Interacts with MFAP4 in a Ca (2+)-dependent manner. Contains mostly 4-hydroxyproline. Proline residues at the third position of the tripeptide repeating unit (G-X-Y) are hydroxylated in some or all of the chains. Post-translationally, contains 3-hydroxyproline at a few sites. This modification occurs on the first proline residue in the sequence motif Gly-Pro-Hyp, where Hyp is 4-hydroxyproline. In terms of processing, lysine residues at the third position of the tripeptide repeating unit (G-X-Y) are 5-hydroxylated in some or all of the chains. O-glycosylated on hydroxylated lysine residues. The O-linked glycan consists of a Glc-Gal disaccharide. Forms the fibrils of tendon, ligaments and bones. In bones the fibrils are mineralized with calcium hydroxyapatite.

The protein localises to the secreted. It localises to the extracellular space. Its subcellular location is the extracellular matrix. Functionally, type I collagen is a member of group I collagen (fibrillar forming collagen). In Homo sapiens (Human), this protein is Collagen alpha-1(I) chain (COL1A1).